The chain runs to 204 residues: Acyl-homoserine-lactone synthase (204 aa).

It belongs to the autoinducer synthase family.

The enzyme catalyses a fatty acyl-[ACP] + S-adenosyl-L-methionine = an N-acyl-L-homoserine lactone + S-methyl-5'-thioadenosine + holo-[ACP] + H(+). Functionally, required for the synthesis of acyl-HSL autoinducers that bind to SolR. The polypeptide is Acyl-homoserine-lactone synthase (solI) (Ralstonia solanacearum (Pseudomonas solanacearum)).